Reading from the N-terminus, the 226-residue chain is Enolase-phosphatase E1 (226 aa).

Belongs to the HAD-like hydrolase superfamily. MasA/MtnC family. Monomer. Requires Mg(2+) as cofactor.

The catalysed reaction is 5-methylsulfanyl-2,3-dioxopentyl phosphate + H2O = 1,2-dihydroxy-5-(methylsulfanyl)pent-1-en-3-one + phosphate. The protein operates within amino-acid biosynthesis; L-methionine biosynthesis via salvage pathway; L-methionine from S-methyl-5-thio-alpha-D-ribose 1-phosphate: step 3/6. Its pathway is amino-acid biosynthesis; L-methionine biosynthesis via salvage pathway; L-methionine from S-methyl-5-thio-alpha-D-ribose 1-phosphate: step 4/6. Functionally, bifunctional enzyme that catalyzes the enolization of 2,3-diketo-5-methylthiopentyl-1-phosphate (DK-MTP-1-P) into the intermediate 2-hydroxy-3-keto-5-methylthiopentenyl-1-phosphate (HK-MTPenyl-1-P), which is then dephosphorylated to form the acireductone 1,2-dihydroxy-3-keto-5-methylthiopentene (DHK-MTPene). This chain is Enolase-phosphatase E1, found in Shewanella frigidimarina (strain NCIMB 400).